Reading from the N-terminus, the 519-residue chain is PTS system mannitol-specific EIICB component (519 aa).

Residues 1 to 30 lie on the Cytoplasmic side of the membrane; the sequence is MAQTETQEKKGLGRKVQAFGSFLSSMIMPN. Residues 19–351 enclose the PTS EIIC type-2 domain; sequence FGSFLSSMIM…MKFTKEPKQD (333 aa). Residues 31 to 52 traverse the membrane as a helical segment; it reads IGAFIAWGFIAAIFIDNGWYPN. Residues 53-56 are Extracellular-facing; that stretch reads KELS. Residues 57-77 form a helical membrane-spanning segment; sequence QLAGPMITYLIPLLIAFSGGR. The Cytoplasmic segment spans residues 78–141; that stretch reads LIHDLRGGIV…QGFEMLFNNF (64 aa). The chain crosses the membrane as a helical span at residues 142-163; sequence SAGILAFIMTILGFKLLAPIMQ. Over 164–172 the chain is Extracellular; sequence FIMHILSVA. Residues 173-193 form a helical membrane-spanning segment; that stretch reads VEFLVHLHLLPIVSIIVEPAK. At 194 to 280 the chain is on the cytoplasmic side; sequence ILFLNNAINH…VLMRPLLFIA (87 aa). The helical transmembrane segment at 281–300 threads the bilayer; it reads VILGGMTGVATYQATGFGFK. Residues 301–320 lie on the Extracellular side of the membrane; that stretch reads SPASPGSFIVYCLNAPKGEF. The chain crosses the membrane as a helical span at residues 321–342; sequence LHMVLGVFLAALVSFVVAALIM. At 343–519 the chain is on the cytoplasmic side; that stretch reads KFTKEPKQDL…NNLKKDQDKA (177 aa). Positions 366–406 are disordered; it reads KSSVSSKLTGATTGTGAAGVAANKANGEDQNEASSEDEEED. Residues 367-387 show a composition bias toward low complexity; it reads SSVSSKLTGATTGTGAAGVAA. Acidic residues predominate over residues 394–406; the sequence is DQNEASSEDEEED. The PTS EIIB type-2 domain maps to 425 to 519; it reads DHVIFACDAG…NNLKKDQDKA (95 aa). Cysteine 431 functions as the Phosphocysteine intermediate; for EIIB activity in the catalytic mechanism. Cysteine 431 carries the phosphocysteine; by EIIA modification.

In terms of assembly, homodimer.

The protein resides in the cell membrane. It carries out the reaction D-mannitol(out) + N(pros)-phospho-L-histidyl-[protein] = D-mannitol 1-phosphate(in) + L-histidyl-[protein]. Its function is as follows. The phosphoenolpyruvate-dependent sugar phosphotransferase system (sugar PTS), a major carbohydrate active transport system, catalyzes the phosphorylation of incoming sugar substrates concomitantly with their translocation across the cell membrane. The enzyme II CmtAB PTS system is involved in D-mannitol transport. This Staphylococcus haemolyticus (strain JCSC1435) protein is PTS system mannitol-specific EIICB component (mtlA).